The primary structure comprises 189 residues: Protein GrpE (189 aa).

The segment covering 1–12 has biased composition (basic residues); that stretch reads MDKKKHGSHAGA. Residues 1-36 form a disordered region; that stretch reads MDKKKHGSHAGAHHTDEPAAETVAPAAEGAPAAADR. The span at 20 to 34 shows a compositional bias: low complexity; the sequence is AETVAPAAEGAPAAA.

The protein belongs to the GrpE family. As to quaternary structure, homodimer.

It localises to the cytoplasm. Its function is as follows. Participates actively in the response to hyperosmotic and heat shock by preventing the aggregation of stress-denatured proteins, in association with DnaK and GrpE. It is the nucleotide exchange factor for DnaK and may function as a thermosensor. Unfolded proteins bind initially to DnaJ; upon interaction with the DnaJ-bound protein, DnaK hydrolyzes its bound ATP, resulting in the formation of a stable complex. GrpE releases ADP from DnaK; ATP binding to DnaK triggers the release of the substrate protein, thus completing the reaction cycle. Several rounds of ATP-dependent interactions between DnaJ, DnaK and GrpE are required for fully efficient folding. This Geobacter metallireducens (strain ATCC 53774 / DSM 7210 / GS-15) protein is Protein GrpE.